A 426-amino-acid polypeptide reads, in one-letter code: Putative two-component response regulator ARR20 (426 aa).

The Response regulatory domain occupies 40–155 (SNRVLLVGAD…VIAVLWRHVY (116 aa)). Aspartate 91 is modified (4-aspartylphosphate). The disordered stretch occupies residues 161–216 (KSGLDKPGESGTVESDPDEYDDLEQDNLYESNEEGSKNTCDHKEEKSPTKKPRMQW). The span at 175–193 (SDPDEYDDLEQDNLYESNE) shows a compositional bias: acidic residues. Basic and acidic residues predominate over residues 194-208 (EGSKNTCDHKEEKSP). The short motif at 210-213 (KKPR) is the Nuclear localization signal element. The segment at residues 213–268 (RMQWTPELHHKFEVAVEKMGSLEKAFPKTILKYMQEELNVQGLTRNNVASHLQKYR) is a DNA-binding region (myb-like GARP).

This sequence belongs to the ARR family. Type-B subfamily. Binds the target DNA as a monomer. Two-component system major event consists of a His-to-Asp phosphorelay between a sensor histidine kinase (HK) and a response regulator (RR). In plants, the His-to-Asp phosphorelay involves an additional intermediate named Histidine-containing phosphotransfer protein (HPt). This multistep phosphorelay consists of a His-Asp-His-Asp sequential transfer of a phosphate group between first a His and an Asp of the HK protein, followed by the transfer to a conserved His of the HPt protein and finally the transfer to an Asp in the receiver domain of the RR protein. As to expression, predominantly expressed in mature pistil tip. Also detected in the shoot apical meristem as well as vascular tissue and hydathodes of the leaves.

The protein localises to the nucleus. Functionally, putative transcriptional activator that binds specifically to the DNA sequence 5'-[AG]GATT-3'. Functions as a response regulator involved in His-to-Asp phosphorelay signal transduction system. Phosphorylation of the Asp residue in the receiver domain activates the ability of the protein to promote the transcription of target genes. Could directly activate some type-A response regulators in response to cytokinins. The protein is Putative two-component response regulator ARR20 (ARR20) of Arabidopsis thaliana (Mouse-ear cress).